A 367-amino-acid polypeptide reads, in one-letter code: Phosphoribosylaminoimidazole-succinocarboxamide synthase (367 aa).

The protein belongs to the SAICAR synthetase family.

The enzyme catalyses 5-amino-1-(5-phospho-D-ribosyl)imidazole-4-carboxylate + L-aspartate + ATP = (2S)-2-[5-amino-1-(5-phospho-beta-D-ribosyl)imidazole-4-carboxamido]succinate + ADP + phosphate + 2 H(+). It participates in purine metabolism; IMP biosynthesis via de novo pathway; 5-amino-1-(5-phospho-D-ribosyl)imidazole-4-carboxamide from 5-amino-1-(5-phospho-D-ribosyl)imidazole-4-carboxylate: step 1/2. The protein is Phosphoribosylaminoimidazole-succinocarboxamide synthase of Vibrio campbellii (strain ATCC BAA-1116).